The chain runs to 190 residues: FGFAWPEELECSRLVNCDETAPATAPVTTNAHGTQKTPGQTRRDYGFWCPRHLHTSNGQGYKFLGIDQCAPPCPNMYFKNYELDVAKSFIGIVSIFCLCATLFTFLTFLIDVKRFRYPERPIIYYSVCYSIVSLMYFIGFLLGNRTACNKADDKLEIGETVVLGSQNKACTVLFMVLYFFTMAGTIWWVI.

One can recognise an FZ domain in the interval 1–20; sequence FGFAWPEELECSRLVNCDET. The Extracellular portion of the chain corresponds to 1 to 89; the sequence is FGFAWPEELE…NYELDVAKSF (89 aa). A helical transmembrane segment spans residues 90 to 110; it reads IGIVSIFCLCATLFTFLTFLI. The Cytoplasmic segment spans residues 111 to 121; that stretch reads DVKRFRYPERP. A helical membrane pass occupies residues 122 to 142; the sequence is IIYYSVCYSIVSLMYFIGFLL. The Extracellular segment spans residues 143–169; the sequence is GNRTACNKADDKLEIGETVVLGSQNKA. An N-linked (GlcNAc...) asparagine glycan is attached at Asn-144. The helical transmembrane segment at 170–190 threads the bilayer; that stretch reads CTVLFMVLYFFTMAGTIWWVI.

It belongs to the G-protein coupled receptor Fz/Smo family.

The protein localises to the membrane. The protein resides in the cell membrane. It localises to the cell surface. Its subcellular location is the apical cell membrane. It is found in the cytoplasmic vesicle membrane. Its function is as follows. Receptor for Wnt proteins. Most of frizzled receptors are coupled to the beta-catenin canonical signaling pathway, which leads to the activation of disheveled proteins, inhibition of GSK-3 kinase, nuclear accumulation of beta-catenin and activation of Wnt target genes. A second signaling pathway involving PKC and calcium fluxes has been seen for some family members, but it is not yet clear if it represents a distinct pathway or if it can be integrated in the canonical pathway, as PKC seems to be required for Wnt-mediated inactivation of GSK-3 kinase. Both pathways seem to involve interactions with G-proteins. Activation by Wnt5A stimulates PKC activity via a G-protein-dependent mechanism. Involved in transduction and intercellular transmission of polarity information during tissue morphogenesis and/or in differentiated tissues. Together with FZD3, may be involved in the neural tube closure and plays a role in the regulation of the establishment of planar cell polarity (PCP), particularly in the orientation of asymmetric bundles of stereocilia on the apical faces of a subset of auditory and vestibular sensory cells located in the inner ear. The chain is Frizzled-6 (FZD6) from Gallus gallus (Chicken).